A 1493-amino-acid polypeptide reads, in one-letter code: Protein Shroom4 (1493 aa).

A PDZ domain is found at 10–92 (YVPVQLQGGA…ILKLIVRRRN (83 aa)). The tract at residues 202 to 282 (CALSLRPEEP…PPQPPVRRDS (81 aa)) is disordered. Composition is skewed to polar residues over residues 234 to 243 (AETSGGSRRT) and 249 to 262 (TPSS…QEGY). The residue at position 411 (serine 411) is a Phosphoserine. The disordered stretch occupies residues 430 to 695 (GSKGMELPPV…SPGQRPGQSS (266 aa)). Composition is skewed to basic and acidic residues over residues 470-484 (QSSK…DDRS) and 498-509 (GEADGHPSEKGF). Positions 513–547 (NRTSRAASELANQQPSASGSLVQQATDCSSTTKAA) are enriched in polar residues. Phosphoserine is present on serine 729. Disordered regions lie at residues 740–759 (AAME…ASTA) and 781–813 (SKSL…NFQP). Polar residues predominate over residues 782-802 (KSLSTSHLPGLTTHSNKTFTQ). At serine 1019 the chain carries Phosphoserine. 4 disordered regions span residues 1117 to 1170 (AAQQ…ETSG), 1187 to 1206 (SFGH…AEQE), 1214 to 1236 (DFLP…PCYY), and 1246 to 1265 (GQEA…PPSG). Residues 1118 to 1129 (AQQQKQQQQQQK) are compositionally biased toward low complexity. Residues 1132–1159 (EEEEEEEEEEEEEEEEEEEEAEEEEEEL) are compositionally biased toward acidic residues. One can recognise an ASD2 domain in the interval 1213–1492 (SDFLPPIRGH…RESLLLGPSN (280 aa)). Positions 1382–1488 (LSGRLARVEN…LKCLRESLLL (107 aa)) form a coiled coil.

The protein belongs to the shroom family. As to quaternary structure, interacts directly with F-actin. In terms of tissue distribution, expressed in all fetal and adult tissues investigated. Expressed in adult heart, brain, placenta, lung, liver, skeletal muscle, kidney and pancreas. In brain regions detected in cerebellum, cerebral cortex, medulla, spinal cord, occipital pole, frontal lobe, temporal lobe and putamen. The expression is strongest in the medulla and weakest in the cerebral cortex.

The protein localises to the cytoplasm. Its subcellular location is the cytoskeleton. In terms of biological role, probable regulator of cytoskeletal architecture that plays an important role in development. May regulate cellular and cytoskeletal architecture by modulating the spatial distribution of myosin II. The polypeptide is Protein Shroom4 (SHROOM4) (Homo sapiens (Human)).